The following is a 435-amino-acid chain: Casein kinase 1-like protein 12 (435 aa).

In terms of domain architecture, Protein kinase spans 9 to 278 (YRLGRKIGSG…LKRIFRDLFI (270 aa)). ATP is bound by residues 15-23 (IGSGSFGEI) and Lys38. The Proton acceptor role is filled by Asp128. Disordered regions lie at residues 313 to 363 (VGTS…RGPM) and 394 to 414 (LRNS…TRKH).

The protein belongs to the protein kinase superfamily. CK1 Ser/Thr protein kinase family. Casein kinase I subfamily. Monomer. Autophosphorylated.

The protein resides in the cytoplasm. It catalyses the reaction L-seryl-[protein] + ATP = O-phospho-L-seryl-[protein] + ADP + H(+). The catalysed reaction is L-threonyl-[protein] + ATP = O-phospho-L-threonyl-[protein] + ADP + H(+). In terms of biological role, casein kinases are operationally defined by their preferential utilization of acidic proteins such as caseins as substrates. It can phosphorylate a large number of proteins. The polypeptide is Casein kinase 1-like protein 12 (Arabidopsis thaliana (Mouse-ear cress)).